Consider the following 879-residue polypeptide: Prostaglandin F2 receptor negative regulator (879 aa).

The N-terminal stretch at 1 to 21 (MGRPAPRPLLLALLSLAVCRG) is a signal peptide. Ig-like C2-type domains lie at 22–137 (RVVR…DTVQ) and 149–263 (PSSR…QEIQ). Residues 22-832 (RVVRVPAGTL…MDVLNAFKYP (811 aa)) lie on the Extracellular side of the membrane. Intrachain disulfides connect C43–C119 and C169–C247. N44 carries N-linked (GlcNAc...) asparagine glycosylation. Positions 89–91 (RGD) match the Cell attachment site motif. T271 bears the Phosphothreonine mark. 4 consecutive Ig-like C2-type domains span residues 276 to 389 (PTAL…WHKV), 406 to 536 (PEYQ…DVFS), 544 to 662 (ASED…AWSP), and 688 to 813 (PTFN…AEIH). Residues C299 and C373 are joined by a disulfide bond. N-linked (GlcNAc...) asparagine glycans are attached at residues N300, N383, and N413. Residues 424–427 (PTEL) carry the Endoplasmic reticulum retention signal motif. A disulfide bridge connects residues C429 and C515. N525, N600, N618, and N691 each carry an N-linked (GlcNAc...) asparagine glycan. C571 and C655 are oxidised to a cystine. The short motif at 703 to 705 (RGD) is the Cell attachment site element. Cysteines 711 and 793 form a disulfide. A helical transmembrane segment spans residues 833 to 853 (LLIGVGLSTVIGLLSCLIGYC). Over 854–879 (SSHWCCKKEVRETRRERRRLMSMEMD) the chain is Cytoplasmic.

Interacts with CD9 and CD81. Part of a complex composed of CD9, CD81 and IGSF8. Also seems to interact with CD63, CD82 and CD151. In terms of tissue distribution, expressed in myoblasts (at protein level).

The protein localises to the endoplasmic reticulum membrane. It localises to the golgi apparatus. It is found in the trans-Golgi network membrane. In terms of biological role, inhibits the binding of prostaglandin F2-alpha (PGF2-alpha) to its specific FP receptor, by decreasing the receptor number rather than the affinity constant. Functional coupling with the prostaglandin F2-alpha receptor seems to occur. In myoblasts, associates with tetraspanins CD9 and CD81 to prevent myotube fusion during muscle regeneration. This is Prostaglandin F2 receptor negative regulator (Ptgfrn) from Mus musculus (Mouse).